The primary structure comprises 405 residues: Peroxisome biogenesis factor 3 (405 aa).

Topologically, residues 1 to 26 are cytoplasmic; sequence MENFQFEDLSPNKVSKVYQDLKKFGS. A helical membrane pass occupies residues 27–49; it reads FLYNHKMGVFLVSFSSGVAYLYH. At 50–124 the chain is on the peroxisomal side; the sequence is NITQSHKRKQ…EKLKLTDQLK (75 aa). Residues 125–144 form a helical membrane-spanning segment; that stretch reads VSIITKLFSVLYIIPMVTIF. At 145–405 the chain is on the cytoplasmic side; the sequence is NRLQINLIGK…NDLDFNKVQF (261 aa).

This sequence belongs to the peroxin-3 family.

Its subcellular location is the peroxisome membrane. Functionally, involved in peroxisome biosynthesis. In Dictyostelium discoideum (Social amoeba), this protein is Peroxisome biogenesis factor 3 (pex3).